The chain runs to 158 residues: SsrA-binding protein (158 aa).

The protein belongs to the SmpB family.

The protein localises to the cytoplasm. Functionally, required for rescue of stalled ribosomes mediated by trans-translation. Binds to transfer-messenger RNA (tmRNA), required for stable association of tmRNA with ribosomes. tmRNA and SmpB together mimic tRNA shape, replacing the anticodon stem-loop with SmpB. tmRNA is encoded by the ssrA gene; the 2 termini fold to resemble tRNA(Ala) and it encodes a 'tag peptide', a short internal open reading frame. During trans-translation Ala-aminoacylated tmRNA acts like a tRNA, entering the A-site of stalled ribosomes, displacing the stalled mRNA. The ribosome then switches to translate the ORF on the tmRNA; the nascent peptide is terminated with the 'tag peptide' encoded by the tmRNA and targeted for degradation. The ribosome is freed to recommence translation, which seems to be the essential function of trans-translation. This is SsrA-binding protein from Parafrankia sp. (strain EAN1pec).